The primary structure comprises 97 residues: RNA-binding protein Hfq (97 aa).

The Sm domain occupies 10-70 (DPFLNALRKE…ISTIVPARSV (61 aa)). Residues 74-97 (HENRPQAAPTSTLVQVETVQQPAE) form a disordered region. A compositionally biased stretch (polar residues) spans 81–97 (APTSTLVQVETVQQPAE).

It belongs to the Hfq family. Homohexamer.

RNA chaperone that binds small regulatory RNA (sRNAs) and mRNAs to facilitate mRNA translational regulation in response to envelope stress, environmental stress and changes in metabolite concentrations. Also binds with high specificity to tRNAs. The sequence is that of RNA-binding protein Hfq from Neisseria meningitidis serogroup A / serotype 4A (strain DSM 15465 / Z2491).